Consider the following 194-residue polypeptide: MNTEDVLNEFRGAGALREGHFVLSSGLHSPVFLQKNLVFQYPDRTERLCKALAAKITEAVGPVDLCVSPAVGGIIPGYETARHLGCPSVYVEREGGEFKLRRAFSIPEGARIAMVEDIVTTGLSSRECVEAIRKAGGNVVVAACIVDRSGGRADPGAPLVALARLDVPAYPADQLPPELAAIPIEDPGSRRLKG.

5-phospho-alpha-D-ribose 1-diphosphate is bound at residue E116 to S124. Orotate-binding residues include T120 and R148.

The protein belongs to the purine/pyrimidine phosphoribosyltransferase family. PyrE subfamily. Homodimer. It depends on Mg(2+) as a cofactor.

It catalyses the reaction orotidine 5'-phosphate + diphosphate = orotate + 5-phospho-alpha-D-ribose 1-diphosphate. It functions in the pathway pyrimidine metabolism; UMP biosynthesis via de novo pathway; UMP from orotate: step 1/2. In terms of biological role, catalyzes the transfer of a ribosyl phosphate group from 5-phosphoribose 1-diphosphate to orotate, leading to the formation of orotidine monophosphate (OMP). The chain is Orotate phosphoribosyltransferase from Phenylobacterium zucineum (strain HLK1).